Consider the following 1436-residue polypeptide: Gag-Pol polyprotein (1436 aa).

The N-myristoyl glycine; by host moiety is linked to residue glycine 2. The segment at 7–31 is interaction with Gp41; the sequence is VLSGGKLDAWEKIRLRPGGRKKYRL. An interaction with host CALM1 region spans residues 8–43; the sequence is LSGGKLDAWEKIRLRPGGRKKYRLKHLVWASRELER. An interaction with host AP3D1 region spans residues 12–19; that stretch reads KLDAWEKI. An interaction with membrane phosphatidylinositol 4,5-bisphosphate and RNA region spans residues 14-33; that stretch reads DAWEKIRLRPGGRKKYRLKH. A Nuclear export signal motif is present at residues 16 to 22; that stretch reads WEKIRLR. The Nuclear localization signal motif lies at 26 to 32; that stretch reads RKKYRLK. The segment at 73–77 is interaction with membrane phosphatidylinositol 4,5-bisphosphate; sequence EDLQS. Residues 110 to 129 form a disordered region; sequence KNKQRTQQAPAAADKEKDSK. Tyrosine 134 is modified (phosphotyrosine; by host). The segment at 191 to 229 is interaction with human PPIA/CYPA and NUP153; that stretch reads NTVGGHQAAMQMLKDTINEEAAEWDRLHPVHAGPIPPGQ. The dimerization/Multimerization of capsid protein p24 stretch occupies residues 279–365; it reads YSPVSILDIK…GGPSHKARVL (87 aa). 2 consecutive CCHC-type zinc fingers follow at residues 393–410 and 414–431; these read VKCS…NCRA and KGCW…DCTG. 2 stretches are compositionally biased toward basic and acidic residues: residues 447–457 and 464–475; these read KAREFPPEEAR and RELRVRRGDHPL. Residues 447-482 are disordered; that stretch reads KAREFPPEEARANSPTSRELRVRRGDHPLSEAGAER. The dimerization of protease stretch occupies residues 490-494; sequence PQITL. Residues 509-578 enclose the Peptidase A2 domain; sequence KEALLDTGAD…TPVNIIGRNI (70 aa). Aspartate 514 acts as the For protease activity; shared with dimeric partner in catalysis. 2 dimerization of protease regions span residues 538–544 and 577–589; these read GIGGFIK and NILT…LNLP. The Reverse transcriptase domain maps to 632 to 822; that stretch reads EGKISKIGPE…PPFLWMGYEL (191 aa). 3 residues coordinate Mg(2+): aspartate 698, aspartate 773, and aspartate 774. The interval 815 to 823 is RT 'primer grip'; that stretch reads FLWMGYELH. Positions 986 to 1002 match the Tryptophan repeat motif motif; that stretch reads WETWWTEHWQATWIPEW. One can recognise an RNase H type-1 domain in the interval 1022–1145; it reads IEGAETYYVD…VDKLVSSGIR (124 aa). Mg(2+)-binding residues include aspartate 1031, glutamate 1066, aspartate 1086, and aspartate 1137. An Integrase-type zinc finger spans residues 1151–1192; it reads DGIDKAQVQHEKYHSNWRAMASDFNLPPIVAKEIVASCDKCQ. Zn(2+) is bound by residues histidine 1160, histidine 1164, cysteine 1188, and cysteine 1191. An Integrase catalytic domain is found at 1202–1352; sequence VDCSPGIWQL…SARERIIDII (151 aa). Mg(2+) contacts are provided by aspartate 1212, aspartate 1264, and glutamate 1300. Positions 1371–1418 form a DNA-binding region, integrase-type; the sequence is FRVYYRDSRDPIWKGPAKLLWKGEGAVVIQDNSEIKVVPRRKAKIIRD.

In terms of assembly, homotrimer; further assembles as hexamers of trimers. Interacts with gp41 (via C-terminus). Interacts with host CALM1; this interaction induces a conformational change in the Matrix protein, triggering exposure of the myristate group. Interacts with host AP3D1; this interaction allows the polyprotein trafficking to multivesicular bodies during virus assembly. Part of the pre-integration complex (PIC) which is composed of viral genome, matrix protein, Vpr and integrase. As to quaternary structure, homodimer; the homodimer further multimerizes as homohexamers or homopentamers. Interacts with human PPIA/CYPA; This interaction stabilizes the capsid. Interacts with human NUP153. Interacts with host PDZD8; this interaction stabilizes the capsid. Interacts with monkey TRIM5; this interaction destabilizes the capsid. Homodimer, whose active site consists of two apposed aspartic acid residues. In terms of assembly, heterodimer of p66 RT and p51 RT (RT p66/p51). Heterodimerization of RT is essential for DNA polymerase activity. The overall folding of the subdomains is similar in p66 RT and p51 RT but the spatial arrangements of the subdomains are dramatically different. As to quaternary structure, homotetramer; may further associate as a homohexadecamer. Part of the pre-integration complex (PIC) which is composed of viral genome, matrix protein, Vpr and integrase. Interacts with human SMARCB1/INI1 and human PSIP1/LEDGF isoform 1. Interacts with human KPNA3; this interaction might play a role in nuclear import of the pre-integration complex. Interacts with human NUP153; this interaction might play a role in nuclear import of the pre-integration complex. The cofactor is Mg(2+). In terms of processing, specific enzymatic cleavages by the viral protease yield mature proteins. The protease is released by autocatalytic cleavage. The polyprotein is cleaved during and after budding, this process is termed maturation. Proteolytic cleavage of p66 RT removes the RNase H domain to yield the p51 RT subunit. Nucleocapsid protein p7 might be further cleaved after virus entry. Post-translationally, tyrosine phosphorylated presumably in the virion by a host kinase. Phosphorylation is apparently not a major regulator of membrane association. Phosphorylated possibly by host MAPK1; this phosphorylation is necessary for Pin1-mediated virion uncoating. In terms of processing, methylated by host PRMT6, impairing its function by reducing RNA annealing and the initiation of reverse transcription.

It is found in the host cell membrane. The protein localises to the host endosome. The protein resides in the host multivesicular body. It localises to the virion membrane. Its subcellular location is the host nucleus. It is found in the host cytoplasm. The protein localises to the virion. The enzyme catalyses Specific for a P1 residue that is hydrophobic, and P1' variable, but often Pro.. The catalysed reaction is Endohydrolysis of RNA in RNA/DNA hybrids. Three different cleavage modes: 1. sequence-specific internal cleavage of RNA. Human immunodeficiency virus type 1 and Moloney murine leukemia virus enzymes prefer to cleave the RNA strand one nucleotide away from the RNA-DNA junction. 2. RNA 5'-end directed cleavage 13-19 nucleotides from the RNA end. 3. DNA 3'-end directed cleavage 15-20 nucleotides away from the primer terminus.. It catalyses the reaction 3'-end directed exonucleolytic cleavage of viral RNA-DNA hybrid.. It carries out the reaction DNA(n) + a 2'-deoxyribonucleoside 5'-triphosphate = DNA(n+1) + diphosphate. With respect to regulation, protease: The viral protease is inhibited by many synthetic protease inhibitors (PIs), such as amprenavir, atazanavir, indinavir, loprinavir, nelfinavir, ritonavir and saquinavir. Use of protease inhibitors in tritherapy regimens permit more ambitious therapeutic strategies. Reverse transcriptase/ribonuclease H: RT can be inhibited either by nucleoside RT inhibitors (NRTIs) or by non nucleoside RT inhibitors (NNRTIs). NRTIs act as chain terminators, whereas NNRTIs inhibit DNA polymerization by binding a small hydrophobic pocket near the RT active site and inducing an allosteric change in this region. Classical NRTIs are abacavir, adefovir (PMEA), didanosine (ddI), lamivudine (3TC), stavudine (d4T), tenofovir (PMPA), zalcitabine (ddC), and zidovudine (AZT). Classical NNRTIs are atevirdine (BHAP U-87201E), delavirdine, efavirenz (DMP-266), emivirine (I-EBU), and nevirapine (BI-RG-587). The tritherapies used as a basic effective treatment of AIDS associate two NRTIs and one NNRTI. Its function is as follows. Mediates, with Gag polyprotein, the essential events in virion assembly, including binding the plasma membrane, making the protein-protein interactions necessary to create spherical particles, recruiting the viral Env proteins, and packaging the genomic RNA via direct interactions with the RNA packaging sequence (Psi). Gag-Pol polyprotein may regulate its own translation, by the binding genomic RNA in the 5'-UTR. At low concentration, the polyprotein would promote translation, whereas at high concentration, the polyprotein would encapsidate genomic RNA and then shut off translation. Functionally, targets the polyprotein to the plasma membrane via a multipartite membrane-binding signal, that includes its myristoylated N-terminus. Matrix protein is part of the pre-integration complex. Implicated in the release from host cell mediated by Vpu. Binds to RNA. Forms the conical core that encapsulates the genomic RNA-nucleocapsid complex in the virion. Most core are conical, with only 7% tubular. The core is constituted by capsid protein hexamer subunits. The core is disassembled soon after virion entry. Host restriction factors such as TRIM5-alpha or TRIMCyp bind retroviral capsids and cause premature capsid disassembly, leading to blocks in reverse transcription. Capsid restriction by TRIM5 is one of the factors which restricts HIV-1 to the human species. Host PIN1 apparently facilitates the virion uncoating. On the other hand, interactions with PDZD8 or CYPA stabilize the capsid. In terms of biological role, encapsulates and protects viral dimeric unspliced genomic RNA (gRNA). Binds these RNAs through its zinc fingers. Acts as a nucleic acid chaperone which is involved in rearangement of nucleic acid secondary structure during gRNA retrotranscription. Also facilitates template switch leading to recombination. As part of the polyprotein, participates in gRNA dimerization, packaging, tRNA incorporation and virion assembly. Its function is as follows. Aspartyl protease that mediates proteolytic cleavages of Gag and Gag-Pol polyproteins during or shortly after the release of the virion from the plasma membrane. Cleavages take place as an ordered, step-wise cascade to yield mature proteins. This process is called maturation. Displays maximal activity during the budding process just prior to particle release from the cell. Also cleaves Nef and Vif, probably concomitantly with viral structural proteins on maturation of virus particles. Hydrolyzes host EIF4GI and PABP1 in order to shut off the capped cellular mRNA translation. The resulting inhibition of cellular protein synthesis serves to ensure maximal viral gene expression and to evade host immune response. Also mediates cleavage of host YTHDF3. Mediates cleavage of host CARD8, thereby activating the CARD8 inflammasome, leading to the clearance of latent HIV-1 in patient CD4(+) T-cells after viral reactivation; in contrast, HIV-1 can evade CARD8-sensing when its protease remains inactive in infected cells prior to viral budding. Functionally, multifunctional enzyme that converts the viral RNA genome into dsDNA in the cytoplasm, shortly after virus entry into the cell. This enzyme displays a DNA polymerase activity that can copy either DNA or RNA templates, and a ribonuclease H (RNase H) activity that cleaves the RNA strand of RNA-DNA heteroduplexes in a partially processive 3' to 5' endonucleasic mode. Conversion of viral genomic RNA into dsDNA requires many steps. A tRNA(3)-Lys binds to the primer-binding site (PBS) situated at the 5'-end of the viral RNA. RT uses the 3' end of the tRNA primer to perform a short round of RNA-dependent minus-strand DNA synthesis. The reading proceeds through the U5 region and ends after the repeated (R) region which is present at both ends of viral RNA. The portion of the RNA-DNA heteroduplex is digested by the RNase H, resulting in a ssDNA product attached to the tRNA primer. This ssDNA/tRNA hybridizes with the identical R region situated at the 3' end of viral RNA. This template exchange, known as minus-strand DNA strong stop transfer, can be either intra- or intermolecular. RT uses the 3' end of this newly synthesized short ssDNA to perform the RNA-dependent minus-strand DNA synthesis of the whole template. RNase H digests the RNA template except for two polypurine tracts (PPTs) situated at the 5'-end and near the center of the genome. It is not clear if both polymerase and RNase H activities are simultaneous. RNase H probably can proceed both in a polymerase-dependent (RNA cut into small fragments by the same RT performing DNA synthesis) and a polymerase-independent mode (cleavage of remaining RNA fragments by free RTs). Secondly, RT performs DNA-directed plus-strand DNA synthesis using the PPTs that have not been removed by RNase H as primers. PPTs and tRNA primers are then removed by RNase H. The 3' and 5' ssDNA PBS regions hybridize to form a circular dsDNA intermediate. Strand displacement synthesis by RT to the PBS and PPT ends produces a blunt ended, linear dsDNA copy of the viral genome that includes long terminal repeats (LTRs) at both ends. Catalyzes viral DNA integration into the host chromosome, by performing a series of DNA cutting and joining reactions. This enzyme activity takes place after virion entry into a cell and reverse transcription of the RNA genome in dsDNA. The first step in the integration process is 3' processing. This step requires a complex comprising the viral genome, matrix protein, Vpr and integrase. This complex is called the pre-integration complex (PIC). The integrase protein removes 2 nucleotides from each 3' end of the viral DNA, leaving recessed CA OH's at the 3' ends. In the second step, the PIC enters cell nucleus. This process is mediated through integrase and Vpr proteins, and allows the virus to infect a non dividing cell. This ability to enter the nucleus is specific of lentiviruses, other retroviruses cannot and rely on cell division to access cell chromosomes. In the third step, termed strand transfer, the integrase protein joins the previously processed 3' ends to the 5' ends of strands of target cellular DNA at the site of integration. The 5'-ends are produced by integrase-catalyzed staggered cuts, 5 bp apart. A Y-shaped, gapped, recombination intermediate results, with the 5'-ends of the viral DNA strands and the 3' ends of target DNA strands remaining unjoined, flanking a gap of 5 bp. The last step is viral DNA integration into host chromosome. This involves host DNA repair synthesis in which the 5 bp gaps between the unjoined strands are filled in and then ligated. Since this process occurs at both cuts flanking the HIV genome, a 5 bp duplication of host DNA is produced at the ends of HIV-1 integration. Alternatively, Integrase may catalyze the excision of viral DNA just after strand transfer, this is termed disintegration. This Human immunodeficiency virus type 1 group M subtype H (isolate VI991) (HIV-1) protein is Gag-Pol polyprotein (gag-pol).